The sequence spans 306 residues: 2-dehydro-3-deoxy-D-gluconate/2-dehydro-3-deoxy-phosphogluconate aldolase (306 aa).

Substrate-binding positions include 61–62, 148–150, and 173–175; these read TT, YNY, and KDT. Catalysis depends on lysine 173, which acts as the Schiff-base intermediate with substrate.

The protein belongs to the DapA family. KDPG aldolase subfamily. Homotetramer; dimer of dimers.

It catalyses the reaction 2-dehydro-3-deoxy-6-phospho-D-gluconate = D-glyceraldehyde 3-phosphate + pyruvate. The enzyme catalyses 2-dehydro-3-deoxy-D-gluconate = D-glyceraldehyde + pyruvate. The protein operates within carbohydrate acid metabolism; 2-dehydro-3-deoxy-D-gluconate degradation; D-glyceraldehyde 3-phosphate and pyruvate from 2-dehydro-3-deoxy-D-gluconate: step 2/2. Its function is as follows. Involved in the degradation of glucose via the Entner-Doudoroff pathway. Catalyzes the reversible cleavage of 2-keto-3-deoxy-6-phosphogluconate (KDPG) and 2-keto-3-deoxygluconate (KDG) forming pyruvate and glyceraldehyde 3-phosphate or glyceraldehyde, respectively. It is not able to use 2-keto-3-deoxy-6-phosphogalactonate (KDPGal) and 2-keto-3-deoxygalactonate (KDGal) as substrate. The chain is 2-dehydro-3-deoxy-D-gluconate/2-dehydro-3-deoxy-phosphogluconate aldolase (kdgA) from Thermoproteus tenax.